Here is a 2258-residue protein sequence, read N- to C-terminus: Genome polyprotein 1 (2258 aa).

In terms of domain architecture, Helicase ATP-binding spans 439–597; it reads SMAQEAKQWS…AVRRYEIKTV (159 aa). 487–494 provides a ligand contact to ATP; that stretch reads RAATVNVT. Positions 612-778 constitute a Helicase C-terminal domain; that stretch reads DKENSLYVLQ…GVQFYINEHF (167 aa). The residue at position 1141 (tyrosine 1141) is an O-(5'-phospho-RNA)-tyrosine. The Peptidase C4 domain maps to 1257–1476; sequence ATLEGMTMKP…TKPRNMQSAP (220 aa). Catalysis depends on for nuclear inclusion protein A activity residues histidine 1302, aspartate 1338, and cysteine 1405. Residues 1745-1869 enclose the RdRp catalytic domain; that stretch reads WTHGSGDGSR…AMSPSFMVKF (125 aa). Disordered regions lie at residues 2027 to 2047 and 2233 to 2258; these read NMAAAPPDNRRSRAVVPRGTS and TSEQTNMRTTETRRRNDYDGHEALLR. Over residues 2242–2258 the composition is skewed to basic and acidic residues; the sequence is TETRRRNDYDGHEALLR.

This sequence belongs to the bymoviruses polyprotein 1 family. VPg is uridylylated by the polymerase and is covalently attached to the 5'-end of the genomic RNA. This uridylylated form acts as a nucleotide-peptide primer for the polymerase. In terms of processing, the viral RNA1 of bymoviruses is expressed as a single polyprotein which undergoes post-translational proteolytic processing by the main proteinase NIa-pro resulting in the production of at least eight individual proteins.

The protein localises to the host cytoplasmic vesicle. Its subcellular location is the virion. The enzyme catalyses RNA(n) + a ribonucleoside 5'-triphosphate = RNA(n+1) + diphosphate. It catalyses the reaction Hydrolyzes glutaminyl bonds, and activity is further restricted by preferences for the amino acids in P6 - P1' that vary with the species of potyvirus, e.g. Glu-Xaa-Xaa-Tyr-Xaa-Gln-|-(Ser or Gly) for the enzyme from tobacco etch virus. The natural substrate is the viral polyprotein, but other proteins and oligopeptides containing the appropriate consensus sequence are also cleaved.. Its function is as follows. Indispensable for virus replication. Functionally, mediates the cap-independent, EIF4E-dependent translation of viral genomic RNAs. Binds to the cap-binding site of host EIF4E and thus interferes with the host EIF4E-dependent mRNA export and translation. VPg-RNA directly binds EIF4E and is a template for transcription. Also forms trimeric complexes with EIF4E-EIF4G, which are templates for translation. In terms of biological role, has RNA-binding and proteolytic activities. An RNA-dependent RNA polymerase that plays an essential role in the virus replication. The protein is Genome polyprotein 1 of Barley mild mosaic virus (strain Na1) (BaMMV).